The primary structure comprises 196 residues: ATP-dependent Clp protease proteolytic subunit (196 aa).

Serine 96 (nucleophile) is an active-site residue. The active site involves histidine 121.

This sequence belongs to the peptidase S14 family. Fourteen ClpP subunits assemble into 2 heptameric rings which stack back to back to give a disk-like structure with a central cavity, resembling the structure of eukaryotic proteasomes.

The protein localises to the cytoplasm. It catalyses the reaction Hydrolysis of proteins to small peptides in the presence of ATP and magnesium. alpha-casein is the usual test substrate. In the absence of ATP, only oligopeptides shorter than five residues are hydrolyzed (such as succinyl-Leu-Tyr-|-NHMec, and Leu-Tyr-Leu-|-Tyr-Trp, in which cleavage of the -Tyr-|-Leu- and -Tyr-|-Trp bonds also occurs).. Cleaves peptides in various proteins in a process that requires ATP hydrolysis. Has a chymotrypsin-like activity. Plays a major role in the degradation of misfolded proteins. In Streptococcus pneumoniae (strain 70585), this protein is ATP-dependent Clp protease proteolytic subunit.